The primary structure comprises 841 residues: DNA ligase (841 aa).

NAD(+)-binding positions include 33–37 (DAQYD), 82–83 (SL), and Glu114. Lys116 (N6-AMP-lysine intermediate) is an active-site residue. The NAD(+) site is built by Arg137, Glu174, Lys300, and Lys324. Zn(2+) is bound by residues Cys418, Cys421, Cys436, and Cys442. A BRCT domain is found at 758 to 841 (EKTGPLDGQT…AFLGEHGQQR (84 aa)).

Belongs to the NAD-dependent DNA ligase family. LigA subfamily. Requires Mg(2+) as cofactor. The cofactor is Mn(2+).

The enzyme catalyses NAD(+) + (deoxyribonucleotide)n-3'-hydroxyl + 5'-phospho-(deoxyribonucleotide)m = (deoxyribonucleotide)n+m + AMP + beta-nicotinamide D-nucleotide.. In terms of biological role, DNA ligase that catalyzes the formation of phosphodiester linkages between 5'-phosphoryl and 3'-hydroxyl groups in double-stranded DNA using NAD as a coenzyme and as the energy source for the reaction. It is essential for DNA replication and repair of damaged DNA. The sequence is that of DNA ligase from Xanthomonas oryzae pv. oryzae (strain KACC10331 / KXO85).